Reading from the N-terminus, the 322-residue chain is MDVLGFICAVFLGTVVLHAKPTVRKDRVLYQDPELLRQATNEDNNSFQYDHEVFLGKEESKTFDQLSPEESKDRLSKIVDRIDGDGNSYITTDELKAWIKRVQKRYVYENVVKVWADYDLNKDNKISWEEYKQATYGYYLSNPEEFDETTDQFSFKKMLPRDERRFKRADLDGDSAANREEFTSFLHPEEFEHMKDIVVLETLEDIDKNSDGHVDEDEYIADMFAHEDRGPEPEWVKTEREQFSDFRDLNKDGKMDLDEIRHWIMPQDYDHAQAEARHLVYESDKDKDQMLTKEEILDNWNMFVGSQATNYGEDLTRNHDEL.

The first 19 residues, 1-19, serve as a signal peptide directing secretion; the sequence is MDVLGFICAVFLGTVVLHA. An N-linked (GlcNAc...) asparagine glycan is attached at N44. 6 EF-hand domains span residues 70–105, 106–141, 157–192, 194–229, 235–270, and 271–306; these read ESKD…VQKR, YVYE…YYLS, KMLP…EEFE, MKDI…HEDR, WVKT…QDYD, and HAQA…FVGS. D83, D85, N87, Y89, E94, D119, N121, D123, K125, E130, D170, D172, D174, E181, D207, N209, D211, H213, E218, D248, N250, D252, K254, E259, D284, D286, D288, M290, and E295 together coordinate Ca(2+). Positions 319–322 match the Prevents secretion from ER motif; it reads HDEL.

This sequence belongs to the CREC family.

The protein resides in the endoplasmic reticulum lumen. Functionally, may regulate calcium-dependent activities in the endoplasmic reticulum lumen or post-ER compartment. This Takifugu rubripes (Japanese pufferfish) protein is Reticulocalbin-1 (rcn1).